A 153-amino-acid polypeptide reads, in one-letter code: Small heat shock protein HspB (153 aa).

A sHSP domain is found at 30–140 (AGTEDNYPPC…KPRRISISGS (111 aa)).

The protein belongs to the small heat shock protein (HSP20) family.

The protein is Small heat shock protein HspB (hspB) of Bradyrhizobium diazoefficiens (strain JCM 10833 / BCRC 13528 / IAM 13628 / NBRC 14792 / USDA 110).